The chain runs to 48 residues: Osteocalcin (48 aa).

Residues 1 to 44 (AGTAPADLTVAQLESLKEVCEANLACEHMMDVSGIIAAYTAYYG) form the Gla domain. Residues Glu14, Glu18, Glu21, and Glu27 each contribute to the Ca(2+) site. Residues Glu14, Glu18, and Glu21 each carry the 4-carboxyglutamate modification. Residues Cys20 and Cys26 are joined by a disulfide bond.

Belongs to the osteocalcin/matrix Gla protein family. Post-translationally, gamma-carboxyglutamate residues are formed by vitamin K dependent carboxylation by GGCX. These residues are essential for the binding of calcium.

The protein localises to the secreted. The protein resides in the extracellular space. Its subcellular location is the extracellular matrix. Functionally, the carboxylated form is one of the main organic components of the bone matrix, which constitutes 1-2% of the total bone protein. The carboxylated form binds strongly to apatite and calcium. In Cyprinus carpio (Common carp), this protein is Osteocalcin (bglap).